We begin with the raw amino-acid sequence, 562 residues long: IRK-interacting protein (562 aa).

2 disordered regions span residues 29-61 and 303-322; these read ASLMQMKSSPSSNYSLRNPSSSSAASPASRPLP and VVSQENSGGRSSGKKNSEMP. The span at 36-61 shows a compositional bias: low complexity; the sequence is SSPSSNYSLRNPSSSSAASPASRPLP. Residues 246–306 adopt a coiled-coil conformation; the sequence is SGVEKLKREL…LREATEVVSQ (61 aa).

Interacts with IRK. As to expression, highly expressed in root tips, shoot apices and developing flowers.

The polypeptide is IRK-interacting protein (Arabidopsis thaliana (Mouse-ear cress)).